A 264-amino-acid polypeptide reads, in one-letter code: 3-methyl-2-oxobutanoate hydroxymethyltransferase (264 aa).

Aspartate 45 and aspartate 84 together coordinate Mg(2+). 3-methyl-2-oxobutanoate contacts are provided by residues aspartate 45–serine 46, aspartate 84, and lysine 113. Residue glutamate 115 participates in Mg(2+) binding. The Proton acceptor role is filled by glutamate 182.

Belongs to the PanB family. In terms of assembly, homodecamer; pentamer of dimers. Requires Mg(2+) as cofactor.

The protein localises to the cytoplasm. The enzyme catalyses 3-methyl-2-oxobutanoate + (6R)-5,10-methylene-5,6,7,8-tetrahydrofolate + H2O = 2-dehydropantoate + (6S)-5,6,7,8-tetrahydrofolate. It participates in cofactor biosynthesis; (R)-pantothenate biosynthesis; (R)-pantoate from 3-methyl-2-oxobutanoate: step 1/2. Functionally, catalyzes the reversible reaction in which hydroxymethyl group from 5,10-methylenetetrahydrofolate is transferred onto alpha-ketoisovalerate to form ketopantoate. The polypeptide is 3-methyl-2-oxobutanoate hydroxymethyltransferase (Caldicellulosiruptor bescii (strain ATCC BAA-1888 / DSM 6725 / KCTC 15123 / Z-1320) (Anaerocellum thermophilum)).